Consider the following 540-residue polypeptide: RNA exonuclease 3 (540 aa).

Residues 7–34 (QFKHIVCPFLRTGRKCQSRNCFFSHDFQ) form a C3H1-type zinc finger. In terms of domain architecture, Exonuclease spans 382–529 (HCALDCELCY…EDAVSALQLV (148 aa)).

The protein belongs to the REXO1/REXO3 family.

It localises to the cytoplasm. The protein resides in the nucleus. 3' to 5' exoribonuclease required for proper 3' end maturation of MRP RNA and of the U5L snRNA. The protein is RNA exonuclease 3 (rex3) of Schizosaccharomyces pombe (strain 972 / ATCC 24843) (Fission yeast).